Reading from the N-terminus, the 33-residue chain is Tail virion protein G9P (33 aa).

Residues 5-25 (VGSFLGAYFLGFALFYGIGFF) traverse the membrane as a helical segment.

It belongs to the inovirus G9P protein family.

The protein resides in the virion. Its subcellular location is the host membrane. Functionally, may initiate with G7P the virion concomitant assembly-budding process, by interacting with the packaging signal of the viral genome. The assembly-budding takes place at the host inner membrane. In turn, G7P and G9P are present at the end of the filamentous virion that emerges first from the bacterial host. The polypeptide is Tail virion protein G9P (IX) (Salmonella phage IKe (Bacteriophage IKe)).